Reading from the N-terminus, the 449-residue chain is Glucose-6-phosphate isomerase (449 aa).

The active-site Proton donor is Glu291. Active-site residues include His312 and Lys426.

The protein belongs to the GPI family.

The protein resides in the cytoplasm. The enzyme catalyses alpha-D-glucose 6-phosphate = beta-D-fructose 6-phosphate. It participates in carbohydrate biosynthesis; gluconeogenesis. The protein operates within carbohydrate degradation; glycolysis; D-glyceraldehyde 3-phosphate and glycerone phosphate from D-glucose: step 2/4. Functionally, catalyzes the reversible isomerization of glucose-6-phosphate to fructose-6-phosphate. The sequence is that of Glucose-6-phosphate isomerase from Streptococcus pyogenes serotype M12 (strain MGAS2096).